Reading from the N-terminus, the 137-residue chain is BolA-like protein 1 (137 aa).

Ser81 is modified (phosphoserine). The disordered stretch occupies residues 114 to 137 (WRENSQLDTSPPCLGGNKKTLGTP).

This sequence belongs to the BolA/IbaG family. As to quaternary structure, interacts with GLRX5. As to expression, widely expressed.

It localises to the mitochondrion. In terms of biological role, acts as a mitochondrial iron-sulfur (Fe-S) cluster assembly factor that facilitates (Fe-S) cluster insertion into a subset of mitochondrial proteins. Probably acts together with the monothiol glutaredoxin GLRX5. May protect cells against oxidative stress. This Homo sapiens (Human) protein is BolA-like protein 1.